The primary structure comprises 714 residues: 2'-5'-oligoadenylate synthase 2 (714 aa).

Residue G2 is the site of N-myristoyl glycine attachment. OAS domain stretches follow at residues 11-336 (KPSE…SWNV) and 344-683 (TPGH…WNVP). An ATP-binding site is contributed by S397. 2 residues coordinate Mg(2+): D409 and D480. 2 residues coordinate ATP: R544 and K547.

This sequence belongs to the 2-5A synthase family. Homodimer. It depends on Mg(2+) as a cofactor. Myristoylation is not essential for its activity. Post-translationally, glycosylated. Glycosylation is essential for its activity.

The protein localises to the cytoplasm. It is found in the perinuclear region. It carries out the reaction 3 ATP = 5'-triphosphoadenylyl-(2'-&gt;5')-adenylyl-(2'-&gt;5')-adenosine + 2 diphosphate. With respect to regulation, produced as a latent enzyme which is activated by double stranded RNA (dsRNA) generated during the course of viral infection. The dsRNA activator must be at least 15 nucleotides long, and no modification of the 2'-hydroxyl group is tolerated. ssRNA or dsDNA do not act as activators. Strongly inhibited by copper, iron and zinc ions. Partially inhibited by cobalt and nickel ions. In terms of biological role, interferon-induced, dsRNA-activated antiviral enzyme which plays a critical role in cellular innate antiviral response. Activated by detection of double stranded RNA (dsRNA): polymerizes higher oligomers of 2'-5'-oligoadenylates (2-5A) from ATP which then bind to the inactive monomeric form of ribonuclease L (RNASEL) leading to its dimerization and subsequent activation. Activation of RNASEL leads to degradation of cellular as well as viral RNA, resulting in the inhibition of protein synthesis, thus terminating viral replication. Can mediate the antiviral effect via the classical RNASEL-dependent pathway or an alternative antiviral pathway independent of RNASEL. In addition, it may also play a role in other cellular processes such as apoptosis, cell growth, differentiation and gene regulation. May act as a negative regulator of lactation, stopping lactation in virally infected mammary gland lobules, thereby preventing transmission of viruses to neonates. Non-infected lobules would not be affected, allowing efficient pup feeding during infection. This Bos taurus (Bovine) protein is 2'-5'-oligoadenylate synthase 2 (OAS2).